The chain runs to 663 residues: Probable acetolactate synthase 2, chloroplastic (663 aa).

The span at 1–26 (MAAAAAAASLSVSDAAAKLPKPGGQV) shows a compositional bias: low complexity. The segment at 1–56 (MAAAAAAASLSVSDAAAKLPKPGGQVQRRRDRDRPRVDAAACTRDSRRPTRERCST) is disordered. A chloroplast-targeting transit peptide spans 1–79 (MAAAAAAASL…TPVRAPVRTR (79 aa)). Composition is skewed to basic and acidic residues over residues 28–37 (RRRDRDRPRV) and 44–54 (RDSRRPTRERC). Residue E132 coordinates thiamine diphosphate. Residues C152 and C298 are joined by a disulfide bond. FAD is bound by residues R234, 340–361 (HGTV…LGVR), and 383–402 (DIDP…ICAD). The thiamine pyrophosphate binding stretch occupies residues 478-558 (QHQMWATQHY…VKVMVLNNQH (81 aa)). Mg(2+)-binding residues include D529 and N556.

The protein belongs to the TPP enzyme family. Mg(2+) is required as a cofactor. It depends on thiamine diphosphate as a cofactor.

It localises to the plastid. Its subcellular location is the chloroplast. It catalyses the reaction 2 pyruvate + H(+) = (2S)-2-acetolactate + CO2. It functions in the pathway amino-acid biosynthesis; L-isoleucine biosynthesis; L-isoleucine from 2-oxobutanoate: step 1/4. It participates in amino-acid biosynthesis; L-valine biosynthesis; L-valine from pyruvate: step 1/4. This is Probable acetolactate synthase 2, chloroplastic (ALS2) from Oryza sativa subsp. japonica (Rice).